The primary structure comprises 364 residues: Fructose-bisphosphate aldolase C-A (364 aa).

Residues arginine 56 and lysine 147 each coordinate substrate. Catalysis depends on glutamate 188, which acts as the Proton acceptor. The active-site Schiff-base intermediate with dihydroxyacetone-P is the lysine 230.

The protein belongs to the class I fructose-bisphosphate aldolase family. As to quaternary structure, homotetramer. Expressed specifically in Purkinje cells in the brain.

The enzyme catalyses beta-D-fructose 1,6-bisphosphate = D-glyceraldehyde 3-phosphate + dihydroxyacetone phosphate. It functions in the pathway carbohydrate degradation; glycolysis; D-glyceraldehyde 3-phosphate and glycerone phosphate from D-glucose: step 4/4. The polypeptide is Fructose-bisphosphate aldolase C-A (Danio rerio (Zebrafish)).